The following is a 242-amino-acid chain: Type III pantothenate kinase (242 aa).

7–14 is a binding site for ATP; it reads DLGNSRFK. Substrate-binding positions include Tyr-91 and 98–101; that span reads GVDR. Asp-100 acts as the Proton acceptor in catalysis. Residue Thr-121 coordinates ATP. A substrate-binding site is contributed by Thr-171.

The protein belongs to the type III pantothenate kinase family. As to quaternary structure, homodimer. NH4(+) is required as a cofactor. K(+) serves as cofactor.

It is found in the cytoplasm. The catalysed reaction is (R)-pantothenate + ATP = (R)-4'-phosphopantothenate + ADP + H(+). It functions in the pathway cofactor biosynthesis; coenzyme A biosynthesis; CoA from (R)-pantothenate: step 1/5. Catalyzes the phosphorylation of pantothenate (Pan), the first step in CoA biosynthesis. The chain is Type III pantothenate kinase from Xanthomonas axonopodis pv. citri (strain 306).